The chain runs to 149 residues: 1,4-dihydroxy-2-naphthoyl-CoA hydrolase (149 aa).

The active site involves aspartate 19.

It belongs to the 4-hydroxybenzoyl-CoA thioesterase family. DHNA-CoA hydrolase subfamily.

The enzyme catalyses 1,4-dihydroxy-2-naphthoyl-CoA + H2O = 1,4-dihydroxy-2-naphthoate + CoA + H(+). Its pathway is cofactor biosynthesis; phylloquinone biosynthesis. It functions in the pathway quinol/quinone metabolism; 1,4-dihydroxy-2-naphthoate biosynthesis; 1,4-dihydroxy-2-naphthoate from chorismate: step 7/7. Functionally, catalyzes the hydrolysis of 1,4-dihydroxy-2-naphthoyl-CoA (DHNA-CoA) to 1,4-dihydroxy-2-naphthoate (DHNA), a reaction involved in phylloquinone (vitamin K1) biosynthesis. In Synechococcus sp. (strain CC9605), this protein is 1,4-dihydroxy-2-naphthoyl-CoA hydrolase.